The sequence spans 440 residues: Alpha-methylserine aldolase (440 aa).

Lys-255 is modified (N6-(pyridoxal phosphate)lysine).

It belongs to the SHMT family. Alpha-methylserine aldolase subfamily. In terms of assembly, homodimer. It depends on pyridoxal 5'-phosphate as a cofactor.

The catalysed reaction is 2-methyl-L-serine = formaldehyde + L-alanine. Catalyzes the reversible interconversion of alpha-methyl-L-serine to L-alanine and formaldehyde. The polypeptide is Alpha-methylserine aldolase (Variovorax paradoxus).